A 90-amino-acid polypeptide reads, in one-letter code: Small ribosomal subunit protein bS18 (90 aa).

Over residues 1 to 14 (MARDNGNKDRDGKR) the composition is skewed to basic and acidic residues. The disordered stretch occupies residues 1–23 (MARDNGNKDRDGKRPNGGRNRKM).

The protein belongs to the bacterial ribosomal protein bS18 family. In terms of assembly, part of the 30S ribosomal subunit. Forms a tight heterodimer with protein bS6.

In terms of biological role, binds as a heterodimer with protein bS6 to the central domain of the 16S rRNA, where it helps stabilize the platform of the 30S subunit. The polypeptide is Small ribosomal subunit protein bS18 (Clostridium acetobutylicum (strain ATCC 824 / DSM 792 / JCM 1419 / IAM 19013 / LMG 5710 / NBRC 13948 / NRRL B-527 / VKM B-1787 / 2291 / W)).